A 588-amino-acid polypeptide reads, in one-letter code: Lysophospholipase 2 (588 aa).

The interval 15–38 (NRALPNAPDGYTPQGETCPSKRPS) is disordered. Residues 31–574 (TCPSKRPSIR…KTYCWNGTIN (544 aa)) enclose the PLA2c domain. N-linked (GlcNAc...) asparagine glycans are attached at residues N41, N58, N77, N84, N88, N119, N123, N157, N167, N228, N272, N302, N340, N431, N449, N478, N481, N501, N510, N529, N553, N570, and N574.

The protein belongs to the lysophospholipase family.

It carries out the reaction a 1-acyl-sn-glycero-3-phosphocholine + H2O = sn-glycerol 3-phosphocholine + a fatty acid + H(+). Catalyzes the release of fatty acids from lysophospholipids. The polypeptide is Lysophospholipase 2 (plb2) (Aspergillus fumigatus (strain ATCC MYA-4609 / CBS 101355 / FGSC A1100 / Af293) (Neosartorya fumigata)).